The following is a 168-amino-acid chain: Acetolactate synthase small subunit (168 aa).

Positions 7–82 constitute an ACT domain; that stretch reads TLSVLVEDKP…VIKIVEQDDE (76 aa).

It belongs to the acetolactate synthase small subunit family. As to quaternary structure, dimer of large and small chains.

It carries out the reaction 2 pyruvate + H(+) = (2S)-2-acetolactate + CO2. It participates in amino-acid biosynthesis; L-isoleucine biosynthesis; L-isoleucine from 2-oxobutanoate: step 1/4. It functions in the pathway amino-acid biosynthesis; L-valine biosynthesis; L-valine from pyruvate: step 1/4. In Mycobacterium bovis (strain ATCC BAA-935 / AF2122/97), this protein is Acetolactate synthase small subunit (ilvH).